A 60-amino-acid polypeptide reads, in one-letter code: Probable tautomerase SAG1079 (60 aa).

The active-site Proton acceptor; via imino nitrogen is proline 2.

Belongs to the 4-oxalocrotonate tautomerase family.

This Streptococcus agalactiae serotype V (strain ATCC BAA-611 / 2603 V/R) protein is Probable tautomerase SAG1079.